The chain runs to 437 residues: Diaminopimelate decarboxylase (437 aa).

N6-(pyridoxal phosphate)lysine is present on Lys-81. Residues Gly-256 and 298 to 301 each bind pyridoxal 5'-phosphate; that span reads EPGR. Substrate-binding residues include Arg-301, Arg-337, and Tyr-341. The active-site Proton donor is the Cys-366. The substrate site is built by Glu-367 and Tyr-396. Tyr-396 serves as a coordination point for pyridoxal 5'-phosphate.

The protein belongs to the Orn/Lys/Arg decarboxylase class-II family. LysA subfamily. In terms of assembly, homodimer. It depends on pyridoxal 5'-phosphate as a cofactor.

It carries out the reaction meso-2,6-diaminopimelate + H(+) = L-lysine + CO2. It participates in amino-acid biosynthesis; L-lysine biosynthesis via DAP pathway; L-lysine from DL-2,6-diaminopimelate: step 1/1. Specifically catalyzes the decarboxylation of meso-diaminopimelate (meso-DAP) to L-lysine. The polypeptide is Diaminopimelate decarboxylase (Actinosynnema pretiosum subsp. auranticum).